We begin with the raw amino-acid sequence, 96 residues long: Small ribosomal subunit protein bS6 (96 aa).

This sequence belongs to the bacterial ribosomal protein bS6 family.

In terms of biological role, binds together with bS18 to 16S ribosomal RNA. This chain is Small ribosomal subunit protein bS6, found in Streptococcus suis (strain 98HAH33).